The sequence spans 476 residues: Ribulose bisphosphate carboxylase large chain (476 aa).

N116 and T166 together coordinate substrate. K168 (proton acceptor) is an active-site residue. Position 170 (K170) interacts with substrate. Residues K194, D196, and E197 each coordinate Mg(2+). The residue at position 194 (K194) is an N6-carboxylysine. Catalysis depends on H286, which acts as the Proton acceptor. Substrate contacts are provided by R287, H319, and S371.

This sequence belongs to the RuBisCO large chain family. Type I subfamily. In terms of assembly, heterohexadecamer of 8 large chains and 8 small chains. The cofactor is Mg(2+).

It carries out the reaction 2 (2R)-3-phosphoglycerate + 2 H(+) = D-ribulose 1,5-bisphosphate + CO2 + H2O. The catalysed reaction is D-ribulose 1,5-bisphosphate + O2 = 2-phosphoglycolate + (2R)-3-phosphoglycerate + 2 H(+). In terms of biological role, ruBisCO catalyzes two reactions: the carboxylation of D-ribulose 1,5-bisphosphate, the primary event in carbon dioxide fixation, as well as the oxidative fragmentation of the pentose substrate. Both reactions occur simultaneously and in competition at the same active site. This chain is Ribulose bisphosphate carboxylase large chain, found in Pseudonocardia dioxanivorans (strain ATCC 55486 / DSM 44775 / JCM 13855 / CB1190).